The primary structure comprises 194 residues: Large ribosomal subunit protein bL25 (194 aa).

Belongs to the bacterial ribosomal protein bL25 family. CTC subfamily. Part of the 50S ribosomal subunit; part of the 5S rRNA/L5/L18/L25 subcomplex. Contacts the 5S rRNA. Binds to the 5S rRNA independently of L5 and L18.

In terms of biological role, this is one of the proteins that binds to the 5S RNA in the ribosome where it forms part of the central protuberance. This is Large ribosomal subunit protein bL25 from Geobacter sulfurreducens (strain ATCC 51573 / DSM 12127 / PCA).